A 445-amino-acid chain; its full sequence is GTPase Der (445 aa).

EngA-type G domains follow at residues 3-167 (PVIA…YAGQ) and 180-353 (VKIA…AAAM). GTP contacts are provided by residues 9-16 (GRPNVGKS), 56-60 (DTGGF), 119-122 (NKAE), 186-193 (GRPNVGKS), 233-237 (DTAGL), and 298-301 (NKWD). The 85-residue stretch at 354 to 438 (AKLPTPKLTR…PLRIEFRSST (85 aa)) folds into the KH-like domain.

This sequence belongs to the TRAFAC class TrmE-Era-EngA-EngB-Septin-like GTPase superfamily. EngA (Der) GTPase family. As to quaternary structure, associates with the 50S ribosomal subunit.

Functionally, GTPase that plays an essential role in the late steps of ribosome biogenesis. In Paraburkholderia xenovorans (strain LB400), this protein is GTPase Der.